We begin with the raw amino-acid sequence, 70 residues long: Protein SlyX homolog (70 aa).

It belongs to the SlyX family.

The polypeptide is Protein SlyX homolog (Shewanella oneidensis (strain ATCC 700550 / JCM 31522 / CIP 106686 / LMG 19005 / NCIMB 14063 / MR-1)).